The sequence spans 818 residues: Fibrous sheath CABYR-binding protein (818 aa).

The interval 1–61 (MEEKDESEQS…PKAALSIGNI (61 aa)) is disordered. Residues Ser-25, Ser-57, and Ser-182 each carry the phosphoserine modification. 2 disordered regions span residues 195–727 (SFSK…PFIT) and 773–805 (LESGNLDDKPKSEEPLERDTIPKDSSGTKNEGV). Composition is skewed to low complexity over residues 490–511 (SPPAEEVPAGEPPEVQSPPAEE), 544–560 (EAPAGEPSEVQSPPAEE), and 697–715 (AELQPPSTEETTSEMVSVE). Basic and acidic residues predominate over residues 773 to 794 (LESGNLDDKPKSEEPLERDTIP).

In terms of assembly, interacts with CABYR. Interacts with ROPN1 and ROPN1L; the interaction increases upon spermatozoa capacitation conditions. Post-translationally, phosphorylated by PKA upon spermatozoa capacitation conditions.

The protein resides in the cell projection. Its subcellular location is the cilium. The protein localises to the flagellum. May be involved in the later stages of fibrous sheath biogenesis and spermatozoa capacitation. Inhibits ROPN1 and ROPN1L SUMOylation. Binds calcium. The sequence is that of Fibrous sheath CABYR-binding protein from Bos taurus (Bovine).